We begin with the raw amino-acid sequence, 532 residues long: Bone morphogenetic protein receptor type-1A (532 aa).

An N-terminal signal peptide occupies residues 1–23 (MTQLYTYIRLLGACLFIISHVQG). At 24–152 (QNLDSMLHGT…IGPFFDGSVR (129 aa)) the chain is on the extracellular side. 3 disulfide bridges follow: cysteine 61-cysteine 82, cysteine 63-cysteine 67, and cysteine 76-cysteine 100. N-linked (GlcNAc...) asparagine glycosylation is present at asparagine 73. Residues 107–109 (DFQ) form a mediates specificity for BMP ligand region. Cystine bridges form between cysteine 110-cysteine 124 and cysteine 125-cysteine 130. A helical transmembrane segment spans residues 153–176 (WLAVLISMAVCIVAMIVFSSCFCY). Topologically, residues 177–532 (KHYCKSISSR…KMVESQDVKI (356 aa)) are cytoplasmic. Positions 204–233 (ESLKDLIDQSQSSGSGSGLPLLVQRTIAKQ) constitute a GS domain. The Protein kinase domain occupies 234–525 (IQMVRQVGKG…RIKKTLAKMV (292 aa)). Residues 240–248 (VGKGRYGEV) and lysine 261 contribute to the ATP site. The Proton acceptor role is filled by aspartate 362.

The protein belongs to the protein kinase superfamily. TKL Ser/Thr protein kinase family. TGFB receptor subfamily. Interacts with low affinity with GDF5; positively regulates chondrocyte differentiation. Interacts with BMP4. Interacts with SCUBE3. Interacts with TSC22D1/TSC-22. Interacts with BMP2; the interaction may induce HAMP expression. Interacts with BMP6. Interacts with heterodimers composed of BMP2 and BMP6 in vitro; the interaction may induce HAMP expression. Mg(2+) is required as a cofactor. The cofactor is Mn(2+). Post-translationally, glycosylated.

It localises to the cell membrane. Its subcellular location is the cell surface. It catalyses the reaction L-threonyl-[receptor-protein] + ATP = O-phospho-L-threonyl-[receptor-protein] + ADP + H(+). The enzyme catalyses L-seryl-[receptor-protein] + ATP = O-phospho-L-seryl-[receptor-protein] + ADP + H(+). In terms of biological role, on ligand binding, forms a receptor complex consisting of two type II and two type I transmembrane serine/threonine kinases. Type II receptors phosphorylate and activate type I receptors which autophosphorylate, then bind and activate SMAD transcriptional regulators. Receptor for BMP2, BMP4, GDF5 and GDF6. Positively regulates chondrocyte differentiation through GDF5 interaction. Mediates induction of adipogenesis by GDF6. May promote the expression of HAMP, potentially via its interaction with BMP2. This is Bone morphogenetic protein receptor type-1A (Bmpr1a) from Rattus norvegicus (Rat).